Here is a 373-residue protein sequence, read N- to C-terminus: Peptide chain release factor 2 (373 aa).

An N5-methylglutamine modification is found at Gln-251.

It belongs to the prokaryotic/mitochondrial release factor family. Methylated by PrmC. Methylation increases the termination efficiency of RF2.

The protein localises to the cytoplasm. Its function is as follows. Peptide chain release factor 2 directs the termination of translation in response to the peptide chain termination codons UGA and UAA. The polypeptide is Peptide chain release factor 2 (Salinispora arenicola (strain CNS-205)).